Consider the following 173-residue polypeptide: Gonadotropin inhibitory hormone peptides (173 aa).

The signal sequence occupies residues 1 to 26; the sequence is MEIISTQKFILLTLATVAFLTPHGAC. The propeptide occupies 27 to 82; that stretch reads LDELMKSSLESREDDDDKYYETKDSILEEKQRSLNFEEMKDWGSKNFMKVNTPTVN. Phenylalanine 95 carries the post-translational modification Phenylalanine amide. The propeptide occupies 98–103; the sequence is SNPEER. Residue phenylalanine 115 is modified to Phenylalanine amide. A propeptide spanning residues 118–140 is cleaved from the precursor; the sequence is AFGESLSRRAPNLSNRSGRSPLA. Residue phenylalanine 154 is modified to Phenylalanine amide. Residues 157 to 173 constitute a propeptide that is removed on maturation; sequence SVPISLSQGVQESEPGM.

The protein belongs to the FARP (FMRFamide related peptide) family. Specifically expressed in the diencephalon.

Its subcellular location is the secreted. Its function is as follows. Hypothalamic factor, responsible for the negative regulation of gonadotropin secretion. In Coturnix japonica (Japanese quail), this protein is Gonadotropin inhibitory hormone peptides (GNIH).